We begin with the raw amino-acid sequence, 228 residues long: Orotate phosphoribosyltransferase (228 aa).

Residues R107, K108, K111, and 133–141 each bind 5-phospho-alpha-D-ribose 1-diphosphate; that span reads EDLTTDGGS. T137 is an orotate binding site.

The protein belongs to the purine/pyrimidine phosphoribosyltransferase family. PyrE subfamily. As to quaternary structure, homodimer. Mg(2+) serves as cofactor.

The catalysed reaction is orotidine 5'-phosphate + diphosphate = orotate + 5-phospho-alpha-D-ribose 1-diphosphate. It participates in pyrimidine metabolism; UMP biosynthesis via de novo pathway; UMP from orotate: step 1/2. In terms of biological role, catalyzes the transfer of a ribosyl phosphate group from 5-phosphoribose 1-diphosphate to orotate, leading to the formation of orotidine monophosphate (OMP). The protein is Orotate phosphoribosyltransferase of Jannaschia sp. (strain CCS1).